The sequence spans 329 residues: Quinone-oxidoreductase QR1, chloroplastic (329 aa).

Belongs to the zinc-containing alcohol dehydrogenase family. Quinone oxidoreductase subfamily.

The protein localises to the plastid. It is found in the chloroplast outer membrane. It carries out the reaction 2 a quinone + NADPH + H(+) = 2 a 1,4-benzosemiquinone + NADP(+). With respect to regulation, inhibited by dicumarol. Its function is as follows. NADPH-dependent single-electron reducing quinone reductase. Involved in haustorium initiation in parasitic plants through redox cycling of exogenous haustorium-inducing factors. Can use 9,10-phenanthrenequinone (PAQ), 1,2-naphthoquinone, 5-hydroxy-1,4-naphthoquinone (juglone) and 2,6-dimethoxy-p-benzoquinone (DMBQ) as substrates, but has no activity with menadione, diamide, 2,3-dimethoxy-5-methyl-1,4-benzoquinone or 1,4-naphthoquinone. The polypeptide is Quinone-oxidoreductase QR1, chloroplastic (Triphysaria versicolor (Yellow owl's clover)).